The primary structure comprises 276 residues: L-aminoadipate-semialdehyde dehydrogenase-phosphopantetheinyl transferase (276 aa).

This sequence belongs to the P-Pant transferase superfamily. AcpS family.

It catalyses the reaction apo-[ACP] + CoA = holo-[ACP] + adenosine 3',5'-bisphosphate + H(+). Functionally, catalyzes the transfer of a 4'-phosphopantetheine moiety from coenzyme A to a serine residue of acceptor proteins, such as alpha-aminoadipate reductase. Necessary for alpha-aminoadipate reductase activity. This is L-aminoadipate-semialdehyde dehydrogenase-phosphopantetheinyl transferase (LYS5) from Eremothecium gossypii (strain ATCC 10895 / CBS 109.51 / FGSC 9923 / NRRL Y-1056) (Yeast).